Here is a 146-residue protein sequence, read N- to C-terminus: Hemoglobin subunit beta (146 aa).

Residues 2–146 form the Globin domain; sequence EWTQQERSII…VVFALGRKYH (145 aa). Heme b is bound by residues H63 and H92.

This sequence belongs to the globin family. As to quaternary structure, heterotetramer of two alpha chains and two beta chains. In terms of tissue distribution, red blood cells.

Its function is as follows. Involved in oxygen transport from gills to the various peripheral tissues. This is Hemoglobin subunit beta (hbb) from Thunnus thynnus (Atlantic bluefin tuna).